An 854-amino-acid chain; its full sequence is Protein translocase subunit SecA (854 aa).

Residues glutamine 81, 99–103 (GEGKT), and aspartate 487 each bind ATP.

Belongs to the SecA family. Monomer and homodimer. Part of the essential Sec protein translocation apparatus which comprises SecA, SecYEG and auxiliary proteins SecDF. Other proteins may also be involved.

The protein resides in the cell membrane. The protein localises to the cytoplasm. The enzyme catalyses ATP + H2O + cellular proteinSide 1 = ADP + phosphate + cellular proteinSide 2.. Its function is as follows. Part of the Sec protein translocase complex. Interacts with the SecYEG preprotein conducting channel. Has a central role in coupling the hydrolysis of ATP to the transfer of proteins into and across the cell membrane, serving as an ATP-driven molecular motor driving the stepwise translocation of polypeptide chains across the membrane. The chain is Protein translocase subunit SecA from Mycoplasma mobile (strain ATCC 43663 / 163K / NCTC 11711) (Mesomycoplasma mobile).